A 272-amino-acid polypeptide reads, in one-letter code: MLLVLNVNNTNTLIAIYSLHADGSTDELRATWRISTRQGQTADEYGILVRSLLASEGLVCEAVRDVVIASVVPPLDWTLRQFCERYFTSKPIFIGPGVKTGLPILTDHPTEVGADRVANCIGAFHRYGGPTIVVDFGTATNFDVVSRKGEFIGGAIAPGLNISAEALFARAARLPRVEIRKPAKMIGTNTVDNLQIGLFWGHIGLVDSILERMISELGHDVKCVATGGLAQVLAGESKYITEVNETLTLDGLRLVYEAQRASREKSGGNRGA.

Asn-6–Leu-13 contacts ATP. Gly-113–Arg-116 serves as a coordination point for substrate. The active-site Proton acceptor is the Asp-115. Asp-135 is a binding site for K(+). Thr-138 is an ATP binding site. Thr-190 contributes to the substrate binding site.

Belongs to the type III pantothenate kinase family. In terms of assembly, homodimer. Requires NH4(+) as cofactor. K(+) is required as a cofactor.

It localises to the cytoplasm. It catalyses the reaction (R)-pantothenate + ATP = (R)-4'-phosphopantothenate + ADP + H(+). The protein operates within cofactor biosynthesis; coenzyme A biosynthesis; CoA from (R)-pantothenate: step 1/5. In terms of biological role, catalyzes the phosphorylation of pantothenate (Pan), the first step in CoA biosynthesis. This Acidobacterium capsulatum (strain ATCC 51196 / DSM 11244 / BCRC 80197 / JCM 7670 / NBRC 15755 / NCIMB 13165 / 161) protein is Type III pantothenate kinase.